We begin with the raw amino-acid sequence, 529 residues long: Peptide chain release factor 3 (529 aa).

Residues 11–279 (AKRRTFAIIS…GLVDWAPKPQ (269 aa)) form the tr-type G domain. GTP contacts are provided by residues 20-27 (SHPDAGKT), 88-92 (DTPGH), and 142-145 (NKLD).

This sequence belongs to the TRAFAC class translation factor GTPase superfamily. Classic translation factor GTPase family. PrfC subfamily.

It is found in the cytoplasm. Functionally, increases the formation of ribosomal termination complexes and stimulates activities of RF-1 and RF-2. It binds guanine nucleotides and has strong preference for UGA stop codons. It may interact directly with the ribosome. The stimulation of RF-1 and RF-2 is significantly reduced by GTP and GDP, but not by GMP. The sequence is that of Peptide chain release factor 3 from Idiomarina loihiensis (strain ATCC BAA-735 / DSM 15497 / L2-TR).